Consider the following 472-residue polypeptide: GTPase Der (472 aa).

EngA-type G domains lie at 3–166 (PVIA…PEQE) and 176–349 (IRIG…DSAM). GTP contacts are provided by residues 9 to 16 (GRPNVGKS), 56 to 60 (DTGGI), 118 to 121 (NKID), 182 to 189 (GRPNVGKS), 229 to 233 (DTAGV), and 294 to 297 (NKWD). In terms of domain architecture, KH-like spans 350–434 (AKWSTNQLTT…PIRFEFRSGE (85 aa)). Residues 433-472 (GENPFAGKKNKLSPRQQKKKERLMKHVKKLKHKQKRKKSR) form a disordered region. Residues 440–472 (KKNKLSPRQQKKKERLMKHVKKLKHKQKRKKSR) show a composition bias toward basic residues.

It belongs to the TRAFAC class TrmE-Era-EngA-EngB-Septin-like GTPase superfamily. EngA (Der) GTPase family. As to quaternary structure, associates with the 50S ribosomal subunit.

In terms of biological role, GTPase that plays an essential role in the late steps of ribosome biogenesis. The chain is GTPase Der from Hahella chejuensis (strain KCTC 2396).